Here is a 655-residue protein sequence, read N- to C-terminus: Ribonuclease 3 (655 aa).

2 disordered regions span residues 1-148 and 171-376; these read MENL…NSEK and LIAP…NIPL. The interval 1 to 400 is unknown; the sequence is MENLEKNTKK…NYIKDNYPVI (400 aa). The segment covering 8–20 has biased composition (basic residues); the sequence is TKKKIKKPNNFKK. Basic and acidic residues-rich tracts occupy residues 21–34 and 69–89; these read NNKDKTEELKDKPT and DYEKKIREIQAKEAKKIRSDE. The span at 92–102 shows a compositional bias: low complexity; the sequence is NNNSKKQNNNK. Positions 103-115 are enriched in basic residues; it reads QAKKKANKNKKQK. Residues 135 to 148 show a composition bias toward polar residues; the sequence is AANNQVKAIPNSEK. A compositionally biased stretch (low complexity) spans 206 to 223; it reads NNFVNNQKNHNKNNAGNK. Composition is skewed to polar residues over residues 229–242 and 250–259; these read PTKPLNQSKLSKST and PNFTSNQPKP. Basic and acidic residues-rich tracts occupy residues 260–274 and 298–309; these read TQKEDSKKVKAKKAE and DQTKKKQPKENK. A compositionally biased stretch (low complexity) spans 310–332; sequence NQQIKAVNLNNNQQKTNNNNQKN. Positions 333 to 350 are enriched in basic and acidic residues; that stretch reads SVDKSENDNNKKKSEANQ. Low complexity predominate over residues 351–360; that stretch reads KQENLNPNNN. An RNase 3 region spans residues 401–655; sequence YADLKEKNRL…KFRGLLKLEK (255 aa). An RNase III domain is found at 432 to 556; the sequence is LELLLKKFKV…FIGAMYLDQG (125 aa). Residue Glu-472 participates in Mg(2+) binding. The active site involves Asp-476. Positions 542 and 545 each coordinate Mg(2+). Glu-545 is an active-site residue. The DRBM domain maps to 582–649; sequence DYKSIFQEII…AKEAISKFRG (68 aa).

It belongs to the ribonuclease III family. In terms of assembly, homodimer. The cofactor is Mg(2+).

It localises to the cytoplasm. The catalysed reaction is Endonucleolytic cleavage to 5'-phosphomonoester.. Its function is as follows. Digests double-stranded RNA. Involved in the processing of primary rRNA transcript to yield the immediate precursors to the large and small rRNAs (23S and 16S). Processes some mRNAs, and tRNAs when they are encoded in the rRNA operon. Processes pre-crRNA and tracrRNA of type II CRISPR loci if present in the organism. This is Ribonuclease 3 (rnc) from Mycoplasmoides gallisepticum (strain R(low / passage 15 / clone 2)) (Mycoplasma gallisepticum).